The sequence spans 179 residues: Large ribosomal subunit protein uL6 (179 aa).

It belongs to the universal ribosomal protein uL6 family. In terms of assembly, part of the 50S ribosomal subunit.

This protein binds to the 23S rRNA, and is important in its secondary structure. It is located near the subunit interface in the base of the L7/L12 stalk, and near the tRNA binding site of the peptidyltransferase center. The chain is Large ribosomal subunit protein uL6 from Pelobacter propionicus (strain DSM 2379 / NBRC 103807 / OttBd1).